The following is a 309-amino-acid chain: F-box/LRR-repeat protein At3g48880 (309 aa).

In terms of domain architecture, F-box spans 10–57 (LRRWEELDTDILVRIFQKFSVFELTSGLAHVCRGWRAACCDPILWKTV). LRR repeat units lie at residues 77–107 (VERR…IFHF), 108–133 (NLFL…VLPA), 159–184 (SIAN…KIMG), and 208–233 (CSAI…NISH).

The protein is F-box/LRR-repeat protein At3g48880 of Arabidopsis thaliana (Mouse-ear cress).